A 510-amino-acid chain; its full sequence is Histidine ammonia-lyase (510 aa).

Positions 143-145 form a cross-link, 5-imidazolinone (Ala-Gly); that stretch reads ASG. Position 144 is a 2,3-didehydroalanine (Ser) (serine 144).

Belongs to the PAL/histidase family. Post-translationally, contains an active site 4-methylidene-imidazol-5-one (MIO), which is formed autocatalytically by cyclization and dehydration of residues Ala-Ser-Gly.

It localises to the cytoplasm. It catalyses the reaction L-histidine = trans-urocanate + NH4(+). It functions in the pathway amino-acid degradation; L-histidine degradation into L-glutamate; N-formimidoyl-L-glutamate from L-histidine: step 1/3. In Yersinia pestis, this protein is Histidine ammonia-lyase.